A 94-amino-acid chain; its full sequence is Large ribosomal subunit protein bL25 (94 aa).

Belongs to the bacterial ribosomal protein bL25 family. As to quaternary structure, part of the 50S ribosomal subunit; part of the 5S rRNA/L5/L18/L25 subcomplex. Contacts the 5S rRNA. Binds to the 5S rRNA independently of L5 and L18.

Its function is as follows. This is one of the proteins that binds to the 5S RNA in the ribosome where it forms part of the central protuberance. In Escherichia coli (strain K12 / DH10B), this protein is Large ribosomal subunit protein bL25.